A 234-amino-acid chain; its full sequence is Thiamine import ATP-binding protein ThiQ (234 aa).

Residues 2–230 (LRFSDVKYRY…EKPPELTQYL (229 aa)) form the ABC transporter domain. 32-39 (GPSGAGKS) lines the ATP pocket.

This sequence belongs to the ABC transporter superfamily. Thiamine importer (TC 3.A.1.19.1) family. As to quaternary structure, the complex is composed of two ATP-binding proteins (ThiQ), two transmembrane proteins (ThiP) and a solute-binding protein (ThiB).

The protein resides in the cell inner membrane. It catalyses the reaction thiamine(out) + ATP + H2O = thiamine(in) + ADP + phosphate + H(+). Its function is as follows. Part of the ABC transporter complex ThiBPQ involved in thiamine import. Responsible for energy coupling to the transport system. This chain is Thiamine import ATP-binding protein ThiQ, found in Aliivibrio fischeri (strain ATCC 700601 / ES114) (Vibrio fischeri).